The following is a 58-amino-acid chain: Large ribosomal subunit protein bL32 (58 aa).

This sequence belongs to the bacterial ribosomal protein bL32 family.

This is Large ribosomal subunit protein bL32 from Ligilactobacillus salivarius (strain UCC118) (Lactobacillus salivarius).